The chain runs to 417 residues: Tyrosine--tRNA ligase (417 aa).

Tyrosine 34 is a binding site for L-tyrosine. The short motif at proline 39–histidine 48 is the 'HIGH' region element. Residues tyrosine 165 and glutamine 169 each coordinate L-tyrosine. The 'KMSKS' region motif lies at lysine 227–serine 231. Residue lysine 230 participates in ATP binding. An S4 RNA-binding domain is found at glutamate 349–lysine 417.

This sequence belongs to the class-I aminoacyl-tRNA synthetase family. TyrS type 1 subfamily. Homodimer.

It localises to the cytoplasm. It carries out the reaction tRNA(Tyr) + L-tyrosine + ATP = L-tyrosyl-tRNA(Tyr) + AMP + diphosphate + H(+). Functionally, catalyzes the attachment of tyrosine to tRNA(Tyr) in a two-step reaction: tyrosine is first activated by ATP to form Tyr-AMP and then transferred to the acceptor end of tRNA(Tyr). This chain is Tyrosine--tRNA ligase, found in Pediococcus pentosaceus (strain ATCC 25745 / CCUG 21536 / LMG 10740 / 183-1w).